The primary structure comprises 150 residues: Large ribosomal subunit protein bL9 (150 aa).

Belongs to the bacterial ribosomal protein bL9 family.

Functionally, binds to the 23S rRNA. This Colwellia psychrerythraea (strain 34H / ATCC BAA-681) (Vibrio psychroerythus) protein is Large ribosomal subunit protein bL9.